A 299-amino-acid polypeptide reads, in one-letter code: Bifunctional protein FolD (299 aa).

Residues 168–170, S193, and I234 contribute to the NADP(+) site; that span reads GRS.

This sequence belongs to the tetrahydrofolate dehydrogenase/cyclohydrolase family. As to quaternary structure, homodimer.

It carries out the reaction (6R)-5,10-methylene-5,6,7,8-tetrahydrofolate + NADP(+) = (6R)-5,10-methenyltetrahydrofolate + NADPH. It catalyses the reaction (6R)-5,10-methenyltetrahydrofolate + H2O = (6R)-10-formyltetrahydrofolate + H(+). It functions in the pathway one-carbon metabolism; tetrahydrofolate interconversion. Functionally, catalyzes the oxidation of 5,10-methylenetetrahydrofolate to 5,10-methenyltetrahydrofolate and then the hydrolysis of 5,10-methenyltetrahydrofolate to 10-formyltetrahydrofolate. The sequence is that of Bifunctional protein FolD from Bartonella tribocorum (strain CIP 105476 / IBS 506).